The sequence spans 316 residues: Pantothenate kinase (316 aa).

95–102 contributes to the ATP binding site; it reads GSVAVGKS.

This sequence belongs to the prokaryotic pantothenate kinase family.

The protein resides in the cytoplasm. It catalyses the reaction (R)-pantothenate + ATP = (R)-4'-phosphopantothenate + ADP + H(+). Its pathway is cofactor biosynthesis; coenzyme A biosynthesis; CoA from (R)-pantothenate: step 1/5. This is Pantothenate kinase from Shigella sonnei (strain Ss046).